The sequence spans 785 residues: Rho GTPase-activating protein 10 (785 aa).

Residues 7-262 (EFSDCYLDSP…IRQNPKDHKR (256 aa)) enclose the BAR domain. In terms of domain architecture, PH spans 265–372 (QFTAEGYLYV…WLEVLGGKEA (108 aa)). Residues 389-574 (AQLDKMGFTI…ILIENHEKIF (186 aa)) enclose the Rho-GAP domain. The interval 576–708 (TPPDATLPEP…PAVTPPSPKL (133 aa)) is disordered. A compositionally biased stretch (pro residues) spans 584-595 (EPGPLSAPPNAP). Residues 598-608 (QSKRQGQRTKR) are compositionally biased toward basic residues. The span at 622 to 632 (GDRPSLPKEDT) shows a compositional bias: basic and acidic residues. Residues 633–650 (PPSSLDSLSSPSPTTATA) are compositionally biased toward low complexity. Positions 675-697 (APSQARSSAVQWLNPQSPTTPSC) are enriched in polar residues. One can recognise an SH3 domain in the interval 727 to 785 (IISRKARAVYPCEAEHSSELSFEIGAIFEDVQTSREPGWLEGTLNGKRGLIPQNYVKLL).

Interacts with PKN3. Interacts with caspase-activated PAK2 proteolytic fragment PAK-2p34; the interaction does not affect ARHGAP10 GTPase activation activity towards RHOA and CDC42. Interacts via its SH3 domain with PTK2/FAK1. Interacts with PTK2B/PYK2; the interaction negatively regulates ARHGAP10 GTPase-activating activity. Interacts with MICAL1 and WDR44; complex formation might transit from GRAF2/ARHGAP10-MICAL1 to GRAF2/ARHGAP10-WDR44 complexes.

It is found in the cytoplasm. It localises to the perinuclear region. The protein resides in the cell membrane. The protein localises to the endosome membrane. GTPase-activating protein that catalyzes the conversion of active GTP-bound Rho GTPases to their inactive GDP-bound form, thus suppressing various Rho GTPase-mediated cellular processes. Also converts Cdc42 to an inactive GDP-bound state. Essential for PTKB2 regulation of cytoskeletal organization via Rho family GTPases. Inhibits PAK2 proteolytic fragment PAK-2p34 kinase activity and changes its localization from the nucleus to the perinuclear region. Stabilizes PAK-2p34 thereby increasing stimulation of cell death. Associates with MICAL1 on the endosomal membrane to promote Rab8-Rab10-dependent tubule extension. After dissociation with MICAL1, recruits WDR44 which connects the endoplasmic reticulum (ER) with the endosomal tubule, thereby participating in the export of a subset of neosynthesized proteins. In Bos taurus (Bovine), this protein is Rho GTPase-activating protein 10 (ARHGAP10).